The sequence spans 245 residues: DNA repair protein RecO (245 aa).

This sequence belongs to the RecO family.

Involved in DNA repair and RecF pathway recombination. This is DNA repair protein RecO from Chromobacterium violaceum (strain ATCC 12472 / DSM 30191 / JCM 1249 / CCUG 213 / NBRC 12614 / NCIMB 9131 / NCTC 9757 / MK).